A 382-amino-acid chain; its full sequence is GDSL esterase/lipase At4g01130 (382 aa).

Positions 1-28 (MASDINRRRSFSLLVLIIVMLYGHKGDS) are cleaved as a signal peptide. Catalysis depends on S41, which acts as the Nucleophile. N-linked (GlcNAc...) asparagine glycans are attached at residues N118, N263, N275, and N330. Residues D348 and H351 contribute to the active site.

Belongs to the 'GDSL' lipolytic enzyme family.

The protein resides in the secreted. This chain is GDSL esterase/lipase At4g01130, found in Arabidopsis thaliana (Mouse-ear cress).